A 663-amino-acid chain; its full sequence is Transcriptional repressor CTCFL (663 aa).

Residues 24-51 are compositionally biased toward basic and acidic residues; sequence EKGLKEEEKDGVCREKDHRSPSELEAER. Disordered stretches follow at residues 24–55 and 221–250; these read EKGL…TSGA and NSNV…QRKT. 10 consecutive C2H2-type zinc fingers follow at residues 257–279, 285–307, 313–336, 342–364, 370–392, 398–421, 428–451, 458–480, 486–508, and 514–537; these read FHCD…MKTH, HLCH…VNTH, YKCN…RYKH, FKCS…VRSH, FQCC…MRTH, YECH…LQKH, YQCP…RNLH, LKCR…QKTH, FKCK…IRTH, and FTCL…RKYH. A C2H2-type 11; atypical zinc finger spans residues 546–568; sequence YKCSKCGKGFSRWINLHRHSEKC. The segment at 569 to 630 is disordered; sequence GSGEAKSAAS…STTKGEQFPG (62 aa). Positions 580–590 are enriched in basic residues; it reads KGRRTRKRKQT. The span at 594 to 607 shows a compositional bias: basic and acidic residues; it reads EATKGQKEAAKGWK. The span at 608–620 shows a compositional bias: low complexity; that stretch reads EAANGDEAAAEEA.

This sequence belongs to the CTCF zinc-finger protein family. In terms of assembly, interacts with histones, PRMT7 and SETD1A. Interacts (via N-terminus) with BAG6/BAT3. In terms of tissue distribution, testis specific. Specifically expressed in primary spermatocytes.

The protein localises to the cytoplasm. Its subcellular location is the nucleus. In terms of biological role, testis-specific DNA binding protein responsible for insulator function, nuclear architecture and transcriptional control, which probably acts by recruiting epigenetic chromatin modifiers. Plays a key role in gene imprinting in male germline, by participating in the establishment of differential methylation at the IGF2/H19 imprinted control region (ICR). Directly binds the unmethylated H19 ICR and recruits the PRMT7 methyltransferase, leading to methylate histone H4 'Arg-3' to form H4R3sme2. This probably leads to recruit de novo DNA methyltransferases at these sites. Seems to act as tumor suppressor. In association with DNMT1 and DNMT3B, involved in activation of BAG1 gene expression by binding to its promoter. Required for dimethylation of H3 lysine 4 (H3K4me2) of MYC and BRCA1 promoters. The polypeptide is Transcriptional repressor CTCFL (CTCFL) (Homo sapiens (Human)).